The primary structure comprises 879 residues: Alanine--tRNA ligase (879 aa).

Zn(2+) contacts are provided by histidine 566, histidine 570, cysteine 668, and histidine 672.

The protein belongs to the class-II aminoacyl-tRNA synthetase family. Zn(2+) is required as a cofactor.

It is found in the cytoplasm. It catalyses the reaction tRNA(Ala) + L-alanine + ATP = L-alanyl-tRNA(Ala) + AMP + diphosphate. Its function is as follows. Catalyzes the attachment of alanine to tRNA(Ala) in a two-step reaction: alanine is first activated by ATP to form Ala-AMP and then transferred to the acceptor end of tRNA(Ala). Also edits incorrectly charged Ser-tRNA(Ala) and Gly-tRNA(Ala) via its editing domain. The chain is Alanine--tRNA ligase from Clostridium botulinum (strain Alaska E43 / Type E3).